A 198-amino-acid chain; its full sequence is FMN-dependent NADH:quinone oxidoreductase (198 aa).

Residues Ser10, 16–18, 94–97, and 138–141 contribute to the FMN site; these read SQS, MYNF, and TRGG.

Belongs to the azoreductase type 1 family. Homodimer. Requires FMN as cofactor.

The enzyme catalyses 2 a quinone + NADH + H(+) = 2 a 1,4-benzosemiquinone + NAD(+). The catalysed reaction is N,N-dimethyl-1,4-phenylenediamine + anthranilate + 2 NAD(+) = 2-(4-dimethylaminophenyl)diazenylbenzoate + 2 NADH + 2 H(+). Quinone reductase that provides resistance to thiol-specific stress caused by electrophilic quinones. In terms of biological role, also exhibits azoreductase activity. Catalyzes the reductive cleavage of the azo bond in aromatic azo compounds to the corresponding amines. The sequence is that of FMN-dependent NADH:quinone oxidoreductase from Shewanella baltica (strain OS223).